A 628-amino-acid polypeptide reads, in one-letter code: FAD-linked oxidoreductase hmp9 (628 aa).

Positions 1-29 (MFCIIRAQLLLLLHLLVLALLLVGTVCNA) are cleaved as a signal peptide. The segment at 34–53 (GHPSELEPLALKRGGSPRDD) is disordered. Asn-80 and Asn-133 each carry an N-linked (GlcNAc...) asparagine glycan. In terms of domain architecture, FAD-binding PCMH-type spans 152-337 (LGQLPVYAID…LKTKIKAYPN (186 aa)). Asn-356 is a glycosylation site (N-linked (GlcNAc...) asparagine).

This sequence belongs to the oxygen-dependent FAD-linked oxidoreductase family.

The protein operates within secondary metabolite biosynthesis. Functionally, FAD-linked oxidoreductase; part of the gene cluster that mediates the biosynthesis of hypothemycin, a resorcylic acid lactone (RAL) that irreversibly inhibits a subset of protein kinases with a conserved cysteine in the ATP binding site such as human ERK2. The first step is performed by both PKSs hmp3 and hmp8 and leads to the production of 7',8'-dehydrozearalenol (DHZ). The highly reducing PKS hpm8 synthesizes the reduced hexaketide (7S,11S,2E,8E)-7,11-dihydroxy-dodeca-2,8-dienoate, which is transferred downstream to the non-reducing PKS hpm3. Hpm3 then extends the reduced hexaketide to a nonaketide, after which regioselective cyclization and macrolactonization affords DHZ. The next step is the conversion of DHZ into aigialomycin C and is performed by the O-methyltransferase hmp5, the FAD-binding monooxygenase hmp7, and the cytochrome P450 monooxygenase hmp1. The wide substrate tolerance of the hmp5 and hmp7 implies that the reactions from DHZ to aigialomycin C can occur in any order. The steps from aigialomycin C to hypothemycin are less well established. The FAD-linked oxidoreductase hmp9 presumably catalyzes oxidation of the C-6' hydroxyl to a ketone. The timing of this oxidation is important, since the resulting enone functional group is a Michael acceptor that can react spontaneously with glutathione, an abundant metabolite in fungal cells. The glutathione S-transferase hmp2 catalyzes cis-trans isomerization of the 7',8' double bond with equilibrium favoring the trans isomer. The hpm6-encoded transporter might preferentially pump hypothemycin out of the cell relative to the trans isomer aigialomycin A. The cis-to-trans isomerization may be coupled with C-4' hydroxylation, since all known hypothemycin analogs containing the enone functional group also have hydroxyl groups at both C-4' and C-5'. The protein is FAD-linked oxidoreductase hmp9 of Hypomyces subiculosus (Nectria subiculosa).